An 87-amino-acid chain; its full sequence is Cell division topological specificity factor (87 aa).

The protein belongs to the MinE family.

Functionally, prevents the cell division inhibition by proteins MinC and MinD at internal division sites while permitting inhibition at polar sites. This ensures cell division at the proper site by restricting the formation of a division septum at the midpoint of the long axis of the cell. In Acidiphilium cryptum (strain JF-5), this protein is Cell division topological specificity factor.